Consider the following 214-residue polypeptide: Pyridoxine/pyridoxamine 5'-phosphate oxidase (214 aa).

Residues 8-11 and Arg-66 contribute to the substrate site; that span reads RLSY. FMN contacts are provided by residues 61–66, 76–77, Lys-83, and Gln-105; these read RTVLLR and FT. Positions 123, 127, and 131 each coordinate substrate. The tract at residues 126 to 146 is disordered; it reads SRPRESQLAAHASDPQSAPVS. FMN is bound by residues 141 to 142 and Trp-187; that span reads QS. 193-195 is a binding site for substrate; it reads RMH. Arg-197 is a binding site for FMN.

It belongs to the pyridoxamine 5'-phosphate oxidase family. In terms of assembly, homodimer. FMN is required as a cofactor.

It carries out the reaction pyridoxamine 5'-phosphate + O2 + H2O = pyridoxal 5'-phosphate + H2O2 + NH4(+). It catalyses the reaction pyridoxine 5'-phosphate + O2 = pyridoxal 5'-phosphate + H2O2. It participates in cofactor metabolism; pyridoxal 5'-phosphate salvage; pyridoxal 5'-phosphate from pyridoxamine 5'-phosphate: step 1/1. It functions in the pathway cofactor metabolism; pyridoxal 5'-phosphate salvage; pyridoxal 5'-phosphate from pyridoxine 5'-phosphate: step 1/1. Its function is as follows. Catalyzes the oxidation of either pyridoxine 5'-phosphate (PNP) or pyridoxamine 5'-phosphate (PMP) into pyridoxal 5'-phosphate (PLP). The sequence is that of Pyridoxine/pyridoxamine 5'-phosphate oxidase from Deinococcus deserti (strain DSM 17065 / CIP 109153 / LMG 22923 / VCD115).